A 328-amino-acid chain; its full sequence is UPF0285 protein MJ1370 (328 aa).

The protein belongs to the UPF0285 family.

The chain is UPF0285 protein MJ1370 from Methanocaldococcus jannaschii (strain ATCC 43067 / DSM 2661 / JAL-1 / JCM 10045 / NBRC 100440) (Methanococcus jannaschii).